The sequence spans 430 residues: Enolase (430 aa).

Glutamine 164 contacts (2R)-2-phosphoglycerate. Glutamate 208 (proton donor) is an active-site residue. Residues aspartate 245, glutamate 288, and aspartate 315 each coordinate Mg(2+). (2R)-2-phosphoglycerate is bound by residues lysine 340, arginine 369, serine 370, and lysine 391. Lysine 340 functions as the Proton acceptor in the catalytic mechanism.

The protein belongs to the enolase family. Mg(2+) serves as cofactor.

Its subcellular location is the cytoplasm. It is found in the secreted. It localises to the cell surface. The catalysed reaction is (2R)-2-phosphoglycerate = phosphoenolpyruvate + H2O. Its pathway is carbohydrate degradation; glycolysis; pyruvate from D-glyceraldehyde 3-phosphate: step 4/5. Its function is as follows. Catalyzes the reversible conversion of 2-phosphoglycerate (2-PG) into phosphoenolpyruvate (PEP). It is essential for the degradation of carbohydrates via glycolysis. This Thermococcus kodakarensis (strain ATCC BAA-918 / JCM 12380 / KOD1) (Pyrococcus kodakaraensis (strain KOD1)) protein is Enolase.